Reading from the N-terminus, the 272-residue chain is Phosphate import ATP-binding protein PstB (272 aa).

An ABC transporter domain is found at 26–267; that stretch reads VAARNLNFYY…PADRRTQDYI (242 aa). ATP is bound at residue 58 to 65; sequence GPSGCGKS.

This sequence belongs to the ABC transporter superfamily. Phosphate importer (TC 3.A.1.7) family. In terms of assembly, the complex is composed of two ATP-binding proteins (PstB), two transmembrane proteins (PstC and PstA) and a solute-binding protein (PstS).

The protein resides in the cell inner membrane. It catalyses the reaction phosphate(out) + ATP + H2O = ADP + 2 phosphate(in) + H(+). Part of the ABC transporter complex PstSACB involved in phosphate import. Responsible for energy coupling to the transport system. The chain is Phosphate import ATP-binding protein PstB from Nitrobacter hamburgensis (strain DSM 10229 / NCIMB 13809 / X14).